A 668-amino-acid polypeptide reads, in one-letter code: tRNA 5-methylaminomethyl-2-thiouridine biosynthesis bifunctional protein MnmC (668 aa).

The tract at residues 1–245 (MKHYSIQPAN…KREMLCGVME (245 aa)) is tRNA (mnm(5)s(2)U34)-methyltransferase. The interval 270 to 668 (IGGGIASALL…LLKGKAVKAG (399 aa)) is FAD-dependent cmnm(5)s(2)U34 oxidoreductase.

It in the N-terminal section; belongs to the methyltransferase superfamily. tRNA (mnm(5)s(2)U34)-methyltransferase family. This sequence in the C-terminal section; belongs to the DAO family. FAD is required as a cofactor.

The protein resides in the cytoplasm. The enzyme catalyses 5-aminomethyl-2-thiouridine(34) in tRNA + S-adenosyl-L-methionine = 5-methylaminomethyl-2-thiouridine(34) in tRNA + S-adenosyl-L-homocysteine + H(+). Catalyzes the last two steps in the biosynthesis of 5-methylaminomethyl-2-thiouridine (mnm(5)s(2)U) at the wobble position (U34) in tRNA. Catalyzes the FAD-dependent demodification of cmnm(5)s(2)U34 to nm(5)s(2)U34, followed by the transfer of a methyl group from S-adenosyl-L-methionine to nm(5)s(2)U34, to form mnm(5)s(2)U34. This Shigella flexneri serotype 5b (strain 8401) protein is tRNA 5-methylaminomethyl-2-thiouridine biosynthesis bifunctional protein MnmC.